The primary structure comprises 416 residues: Serine/threonine-protein kinase 26 (416 aa).

Residue A2 is modified to N-acetylalanine. Phosphoserine is present on S4. Residues 24-274 form the Protein kinase domain; the sequence is FTKLERIGKG…AKELLKHKFI (251 aa). Residues 30 to 38 and K53 contribute to the ATP site; that span reads IGKGSFGEV. The Proton acceptor role is filled by D144. T178 is subject to Phosphothreonine; by autocatalysis. The interval 297–340 is disordered; the sequence is EGHSDDESDSEGSDSESTSRENNTHPEWSFTTVRKKPDPKKVQN. S300, S304, S306, S309, and S325 each carry phosphoserine. Phosphothreonine occurs at positions 327 and 328.

Belongs to the protein kinase superfamily. STE Ser/Thr protein kinase family. STE20 subfamily. As to quaternary structure, homodimer. Interacts with PDCD10. Interacts with GOLGA2. Interacts with CTTNBP2NL. Interacts with RIPOR1 (via C-terminus); this interaction occurs in a PDCD10-dependent and Rho-independent manner. Interacts with PDCD10; this interaction is required for the association of STK26 with RIPOR1. Part of the core of STRIPAK complexes composed of PP2A catalytic and scaffolding subunits, the striatins (PP2A regulatory subunits), the striatin-associated proteins MOB4, STRIP1 and STRIP2, PDCD10 and members of the STE20 kinases, such as STK24 and STK26. Mg(2+) is required as a cofactor.

It is found in the cytoplasm. Its subcellular location is the golgi apparatus. The enzyme catalyses L-seryl-[protein] + ATP = O-phospho-L-seryl-[protein] + ADP + H(+). It catalyses the reaction L-threonyl-[protein] + ATP = O-phospho-L-threonyl-[protein] + ADP + H(+). Interaction with Golgi matrix protein GOLGA2 leads to autophosphorylation on Thr-178, possibly as a consequence of stabilization of dimer formation. May also be activated by C-terminal cleavage. Serine/threonine-protein kinase that acts as a mediator of cell growth. Modulates apoptosis. In association with STK24 negatively regulates Golgi reorientation in polarized cell migration upon RHO activation. Phosphorylates ATG4B at 'Ser-383', thereby increasing autophagic flux. Part of the striatin-interacting phosphatase and kinase (STRIPAK) complexes. STRIPAK complexes have critical roles in protein (de)phosphorylation and are regulators of multiple signaling pathways including Hippo, MAPK, nuclear receptor and cytoskeleton remodeling. Different types of STRIPAK complexes are involved in a variety of biological processes such as cell growth, differentiation, apoptosis, metabolism and immune regulation. This chain is Serine/threonine-protein kinase 26, found in Homo sapiens (Human).